Reading from the N-terminus, the 163-residue chain is Probable calcium-binding protein CML26 (163 aa).

Ala-2 carries the post-translational modification N-acetylalanine. 4 EF-hand domains span residues 16–51 (STDM…MGTS), 52–82 (YTEE…TICR), 85–120 (SSAV…LGMT), and 121–156 (CSVE…PELV). The Ca(2+) site is built by Asp-29, Asn-31, Asp-33, Lys-35, Glu-40, Asp-65, Asp-67, Asp-69, Glu-76, Asp-98, Asn-100, Asn-102, Glu-109, Asp-134, Asp-136, Asp-138, Asn-140, and Glu-145.

Potential calcium sensor. The polypeptide is Probable calcium-binding protein CML26 (CML26) (Arabidopsis thaliana (Mouse-ear cress)).